The primary structure comprises 116 residues: Ribonuclease P protein component (116 aa).

The protein belongs to the RnpA family. As to quaternary structure, consists of a catalytic RNA component (M1 or rnpB) and a protein subunit.

The catalysed reaction is Endonucleolytic cleavage of RNA, removing 5'-extranucleotides from tRNA precursor.. Its function is as follows. RNaseP catalyzes the removal of the 5'-leader sequence from pre-tRNA to produce the mature 5'-terminus. It can also cleave other RNA substrates such as 4.5S RNA. The protein component plays an auxiliary but essential role in vivo by binding to the 5'-leader sequence and broadening the substrate specificity of the ribozyme. The protein is Ribonuclease P protein component of Geobacillus sp. (strain WCH70).